Reading from the N-terminus, the 623-residue chain is Chaperone protein HtpG (623 aa).

Positions 1-326 are a; substrate-binding; that stretch reads MAEEKRQFQA…SQDLPLNVSR (326 aa). The tract at residues 327–543 is b; sequence EMLQHNPVLS…EGEMSMHLEK (217 aa). Positions 544–623 are c; that stretch reads MLRAHNQAPG…VSVMEKGLLG (80 aa).

The protein belongs to the heat shock protein 90 family. As to quaternary structure, homodimer.

It is found in the cytoplasm. Functionally, molecular chaperone. Has ATPase activity. The chain is Chaperone protein HtpG from Paramagnetospirillum magneticum (strain ATCC 700264 / AMB-1) (Magnetospirillum magneticum).